Reading from the N-terminus, the 245-residue chain is Cysteine-rich secretory protein 3 (245 aa).

The N-terminal stretch at 1–22 is a signal peptide; it reads MALLPVLLFLAAVLLPFFPASG. The SCP domain occupies 42-171; the sequence is VNKHNDLRRT…TLKYYYVCQY (130 aa). Cystine bridges form between Cys191–Cys198, Cys194–Cys203, Cys207–Cys240, Cys216–Cys234, and Cys225–Cys238. Positions 207-240 constitute a ShKT domain; that stretch reads CEYEDLVSNCDSLKKIAGCEHELLKENCKTTCQC.

The protein belongs to the CRISP family. Interacts with A1BG. As to expression, expressed in the salivary gland, in the ampulla and the seminal vesicle.

It is found in the secreted. This Equus caballus (Horse) protein is Cysteine-rich secretory protein 3 (CRISP3).